We begin with the raw amino-acid sequence, 152 residues long: Perlwapin (152 aa).

Positions 1 to 18 are cleaved as a signal peptide; the sequence is LILCVVVCTAAVLGTAAG. Residues 19–61 form the WAP 1 domain; the sequence is YESQLPGCPPGAYPAICARYCYSDRDCASGYYCCNTGCLNICV. Intrachain disulfides connect cysteine 26-cysteine 52, cysteine 35-cysteine 56, cysteine 39-cysteine 51, cysteine 45-cysteine 60, cysteine 69-cysteine 95, cysteine 77-cysteine 100, cysteine 82-cysteine 94, cysteine 88-cysteine 103, cysteine 112-cysteine 139, cysteine 122-cysteine 142, cysteine 126-cysteine 138, and cysteine 132-cysteine 146. Residues 62 to 107 enclose the WAP 2; atypical domain; it reads PKPKPGLCPSITQSPCRGNVCNNDQDCPGNRKCCGKPGCKRCYRPK. The WAP 3 domain occupies 108 to 150; sequence KPGSCPARKYEAGPCVVYCDGDFDCPGDKKCCGGCPRLCEKPC.

In terms of tissue distribution, component of the acid-soluble and acid-insoluble organic matrix of prismatic shell layers (at protein level).

The protein resides in the secreted. Functionally, inhibits growth of calcium carbonate crystals. May inhibit growth of certain crystallographic planes in the mineral phase of nacre in the shell. The sequence is that of Perlwapin from Haliotis asinina (Donkey's ear abalone).